A 47-amino-acid polypeptide reads, in one-letter code: Photosystem II reaction center protein K (47 aa).

A propeptide spanning residues 1 to 10 (MAPLTLDLLA) is cleaved from the precursor. The helical transmembrane segment at 26–46 (LPLIPLLFFLLVFVWQAAVGF) threads the bilayer.

It belongs to the PsbK family. In terms of assembly, PSII is composed of 1 copy each of membrane proteins PsbA, PsbB, PsbC, PsbD, PsbE, PsbF, PsbH, PsbI, PsbJ, PsbK, PsbL, PsbM, PsbT, PsbX, PsbY, Psb30/Ycf12, peripheral proteins PsbO, CyanoQ (PsbQ), PsbU, PsbV and a large number of cofactors. It forms dimeric complexes.

It localises to the cellular thylakoid membrane. Functionally, one of the components of the core complex of photosystem II (PSII). PSII is a light-driven water:plastoquinone oxidoreductase that uses light energy to abstract electrons from H(2)O, generating O(2) and a proton gradient subsequently used for ATP formation. It consists of a core antenna complex that captures photons, and an electron transfer chain that converts photonic excitation into a charge separation. The polypeptide is Photosystem II reaction center protein K (Prochlorococcus marinus (strain SARG / CCMP1375 / SS120)).